The following is a 69-amino-acid chain: Protein SlyX homolog (69 aa).

Belongs to the SlyX family.

This is Protein SlyX homolog from Maricaulis maris (strain MCS10) (Caulobacter maris).